Reading from the N-terminus, the 1408-residue chain is ABC multidrug transporter MDR1 (1408 aa).

A compositionally biased stretch (polar residues) spans 79–88 (IAASSDTLRN). The tract at residues 79–102 (IAASSDTLRNSPLEKPISNAFSKS) is disordered. 2 helical membrane-spanning segments follow: residues 147–167 (FAAP…VAAG) and 223–243 (LYLM…MFIW). Positions 157–464 (VLGLVLAVAA…LAPELAAVTK (308 aa)) constitute an ABC transmembrane type-1 1 domain. N-linked (GlcNAc...) asparagine glycosylation is present at Asn-244. 4 helical membrane passes run 296 to 316 (KVAL…LAFV), 321 to 341 (LAGA…IMMT), 408 to 428 (IMFF…GILV), and 436 to 456 (GIVI…AMLA). One can recognise an ABC transporter 1 domain in the interval 499–744 (ISFENVKFHY…ENGPYAQLVN (246 aa)). 534 to 541 (GASGSGKS) provides a ligand contact to ATP. N-linked (GlcNAc...) asparagine glycosylation is present at Asn-606. The next 2 helical transmembrane spans lie at 838–858 (IIAF…AILF) and 882–902 (LWYF…SAGF). Residues 838–1125 (IIAFIAAICA…VFTFVPDASK (288 aa)) form the ABC transmembrane type-1 2 domain. Asn-934 is a glycosylation site (N-linked (GlcNAc...) asparagine). The next 4 helical transmembrane spans lie at 952–972 (GLFG…IGGC), 981–999 (LLAL…GGYI), 1072–1092 (GLTF…IIDA), and 1099–1119 (FYTV…VFTF). 2 N-linked (GlcNAc...) asparagine glycosylation sites follow: Asn-1127 and Asn-1182. The ABC transporter 2 domain occupies 1162-1402 (VRIEGVHFRY…KGGYYELVQM (241 aa)). ATP is bound at residue 1197-1204 (GPSGCGKS). N-linked (GlcNAc...) asparagine glycosylation is present at Asn-1404.

This sequence belongs to the ABC transporter superfamily. ABCB family. Multidrug resistance exporter (TC 3.A.1.201) subfamily.

The protein localises to the cell membrane. The catalysed reaction is itraconazole(in) + ATP + H2O = itraconazole(out) + ADP + phosphate + H(+). It catalyses the reaction voriconazole(in) + ATP + H2O = voriconazole(out) + ADP + phosphate + H(+). The enzyme catalyses fluconazole(in) + ATP + H2O = fluconazole(out) + ADP + phosphate + H(+). In terms of biological role, pleiotropic ABC efflux transporter that confers resistance to structurally and functionally unrelated compounds including azoles such as fluconazole (FLC), itraconazole (ITC), posaconazole (POS), and voriconazole (VRC). This Cryptococcus neoformans var. grubii serotype A (strain H99 / ATCC 208821 / CBS 10515 / FGSC 9487) (Filobasidiella neoformans var. grubii) protein is ABC multidrug transporter MDR1.